We begin with the raw amino-acid sequence, 66 residues long: Large ribosomal subunit protein bL35 (66 aa).

Over residues 1 to 16 (MPKQKTHRASAKRFKR) the composition is skewed to basic residues. Residues 1–21 (MPKQKTHRASAKRFKRTGSGG) form a disordered region.

This sequence belongs to the bacterial ribosomal protein bL35 family.

This chain is Large ribosomal subunit protein bL35, found in Streptococcus gordonii (strain Challis / ATCC 35105 / BCRC 15272 / CH1 / DL1 / V288).